The primary structure comprises 564 residues: Acetylcholine receptor subunit alpha-type deg-3 (564 aa).

The first 20 residues, 1–20 (MTLKIRTIIILFCVISVTTT), serve as a signal peptide directing secretion. Residues 21-268 (SQSLNATLKT…SLVIQRKPLY (248 aa)) lie on the Extracellular side of the membrane. N25, N37, N125, and N198 each carry an N-linked (GlcNAc...) asparagine glycan. 2 cysteine pairs are disulfide-bonded: C185-C199 and C248-C249. A run of 3 helical transmembrane segments spans residues 269–289 (YLVN…TGFF), 302–319 (INLG…MLMV), and 329–353 (FVPL…LTSV). Over 354-526 (VLSVQGRRQY…WEFLATVLDR (173 aa)) the chain is Cytoplasmic. A helical transmembrane segment spans residues 527–547 (FLLIVFVGAVVIVTAGLILVG).

The protein belongs to the ligand-gated ion channel (TC 1.A.9) family. Acetylcholine receptor (TC 1.A.9.1) subfamily. As to quaternary structure, the functional receptor is a heteromer of deg-3 and des-2. Interacts with ric-3; which is required for proper receptor folding.

The protein localises to the postsynaptic cell membrane. The protein resides in the cell membrane. Functionally, subunit of the non-synaptic neuronal acetylcholine receptor, which may play a role in chemotaxis towards choline. After binding choline or acetylcholine, the AChR responds by an extensive change in conformation that affects all subunits and leads to opening of an ion-conducting channel across the plasma membrane. In Caenorhabditis elegans, this protein is Acetylcholine receptor subunit alpha-type deg-3 (deg-3).